Consider the following 221-residue polypeptide: UPF0502 protein Sputcn32_1644 (221 aa).

It belongs to the UPF0502 family.

The chain is UPF0502 protein Sputcn32_1644 from Shewanella putrefaciens (strain CN-32 / ATCC BAA-453).